The chain runs to 754 residues: Deadenylation-dependent mRNA-decapping factor pdc2 (754 aa).

The interaction with lsm1 stretch occupies residues 499-754; the sequence is LESIWKALYI…MGLDARQLSA (256 aa).

The protein belongs to the PAT1 family. As to quaternary structure, interacts with dcp2. Interacts with lsm1; via C-terminus.

It is found in the cytoplasm. It localises to the nucleus. Its subcellular location is the P-body. Functionally, activator of decapping that functions as a general and active mechanism of translational repression and required for P-body formation. Stabilizes the 3' terminus of mRNAs and modulates the rates of mRNA-decapping that occur following deadenylation. Might be required for promoting the formation or the stabilization of the preinitiation translation complexes. Necessary for accurate chromosome transmission during cell division. Together with lsm1, recruits the deadenylase ccr4 to P-bodies. The polypeptide is Deadenylation-dependent mRNA-decapping factor pdc2 (Schizosaccharomyces pombe (strain 972 / ATCC 24843) (Fission yeast)).